Here is a 218-residue protein sequence, read N- to C-terminus: Large ribosomal subunit protein uL4 (218 aa).

The segment at 46–102 (ARQGTHSTKTRGEVRGGGRKPFRQKGTGRARQGSIRAPHFTGGGISHGPKPRDYSQR) is disordered. Residues 62–73 (GGRKPFRQKGTG) are compositionally biased toward basic residues.

The protein belongs to the universal ribosomal protein uL4 family. In terms of assembly, part of the 50S ribosomal subunit.

Its function is as follows. One of the primary rRNA binding proteins, this protein initially binds near the 5'-end of the 23S rRNA. It is important during the early stages of 50S assembly. It makes multiple contacts with different domains of the 23S rRNA in the assembled 50S subunit and ribosome. Forms part of the polypeptide exit tunnel. This is Large ribosomal subunit protein uL4 from Corynebacterium glutamicum (strain R).